The sequence spans 923 residues: MGELAKEILPVNIEDELKQSYLDYAMSVIVGRALPDARDGLKPVHRRVLYAMSELGNDWNKPYKKSARVVGDVIGKYHPHGDTAVYDTIVRMAQPFSLRYMLVDGQGNFGSVDGDNAAAMRYTEVRMAKLAHELLADLEKETVDWVPNYDGTEQIPAVMPTKIPNLLVNGSSGIAVGMATNIPPHNLGEVIDGCLALMDNPDLTVDELMQYIPGPDFPTAGIINGRAGIIEAYRTGRGRIYIRARAVVEEMEKGGGREQIIITELPYQLNKARLIEKIAELVKEKKIEGISELRDESDKDGMRVVIELRRGEVGEVVLNNLYAQTQLQSVFGINVVALVDGQPRTLNLKDMLEVFVRHRREVVTRRTVYELRKARERGHILEGQAVALSNIDPVIELIKSSPTPAEAKERLIATAWESSAVEAMVERAGADACRPEDLDPQYGLRDGKYYLSPEQAQAILELRLHRLTGLEHEKLLSEYQEILNLIGELIRILTNPARLMEVIREELEAVKAEFGDARRTEIVASQVDLTIADLITEEDRVVTISHGGYAKSQPLAAYQAQRRGGKGKSATGMKDEDYIEHLLVANSHATLLLFSSKGKVYWLRTFEIPEASRTARGRPLVNLLPLDEGERITAMLQIDLEALQQNGGADDDLDEAEGAVLEGEVVEAAEVEEVEGETAELVAEPTGAYIFMATAFGTVKKTPLVQFSRPRSSGLIALKLEEGDTLIAAAITDGAKEVMLFSSAGKVIRFAESVVRIMGRNARGVRGMRLGKGQQLISMLIPESGAQILTASERGFGKRTPLSKFPRRGRGGQGVIAMVTNERNGALIAAVQVQEGEEIMLISDQGTLVRTRVDEVSLSGRNTQGVTLIKLASDEVLVGLERVQEPSGGDDEDLPEGEEAAESLGESAESESEPAAEAEGNEE.

The region spanning 34-534 (LPDARDGLKP…SQVDLTIADL (501 aa)) is the Topo IIA-type catalytic domain. Catalysis depends on Y122, which acts as the O-(5'-phospho-DNA)-tyrosine intermediate. The GyrA-box signature appears at 561–567 (QRRGGKG). The segment at 881-923 (ERVQEPSGGDDEDLPEGEEAAESLGESAESESEPAAEAEGNEE) is disordered. Acidic residues-rich tracts occupy residues 888-901 (GGDDEDLPEGEEAA) and 908-923 (AESESEPAAEAEGNEE).

The protein belongs to the type II topoisomerase GyrA/ParC subunit family. In terms of assembly, heterotetramer, composed of two GyrA and two GyrB chains. In the heterotetramer, GyrA contains the active site tyrosine that forms a transient covalent intermediate with DNA, while GyrB binds cofactors and catalyzes ATP hydrolysis.

Its subcellular location is the cytoplasm. It carries out the reaction ATP-dependent breakage, passage and rejoining of double-stranded DNA.. In terms of biological role, a type II topoisomerase that negatively supercoils closed circular double-stranded (ds) DNA in an ATP-dependent manner to modulate DNA topology and maintain chromosomes in an underwound state. Negative supercoiling favors strand separation, and DNA replication, transcription, recombination and repair, all of which involve strand separation. Also able to catalyze the interconversion of other topological isomers of dsDNA rings, including catenanes and knotted rings. Type II topoisomerases break and join 2 DNA strands simultaneously in an ATP-dependent manner. In Pseudomonas aeruginosa (strain ATCC 15692 / DSM 22644 / CIP 104116 / JCM 14847 / LMG 12228 / 1C / PRS 101 / PAO1), this protein is DNA gyrase subunit A.